Here is a 252-residue protein sequence, read N- to C-terminus: Sugar fermentation stimulation protein homolog (252 aa).

The protein belongs to the SfsA family.

The sequence is that of Sugar fermentation stimulation protein homolog from Picosynechococcus sp. (strain ATCC 27264 / PCC 7002 / PR-6) (Agmenellum quadruplicatum).